We begin with the raw amino-acid sequence, 124 residues long: Fluoride-specific ion channel FluC (124 aa).

4 helical membrane passes run 5–25 (ILAVSIAGIAGTLLRFATGTW), 38–58 (TLAVNIVGCLIIGVLYGLFLL), 69–89 (GLIVGFVGGLTTFSSFSLDTL), and 99–119 (LALGYAGISVFGGLLATWAGL). Na(+)-binding residues include Gly76 and Thr79.

The protein belongs to the fluoride channel Fluc/FEX (TC 1.A.43) family.

It localises to the cell inner membrane. It catalyses the reaction fluoride(in) = fluoride(out). With respect to regulation, na(+) is not transported, but it plays an essential structural role and its presence is essential for fluoride channel function. Its function is as follows. Fluoride-specific ion channel. Important for reducing fluoride concentration in the cell, thus reducing its toxicity. This chain is Fluoride-specific ion channel FluC, found in Pseudomonas syringae pv. syringae (strain B728a).